A 492-amino-acid chain; its full sequence is Zinc finger protein 385B (492 aa).

2 consecutive Matrin-type zinc fingers follow at residues 8–44 and 143–173; these read KKLL…VKQL and ISCN…KLKA. Positions 159 to 206 are disordered; the sequence is EAHYKGSKHAKKLKAQESPKNKQKSAVAQDSGTKTITSTSTNTTTTTT. Positions 189-206 are enriched in low complexity; that stretch reads SGTKTITSTSTNTTTTTT. 2 Matrin-type zinc fingers span residues 303-337 and 371-401; these read KKLL…LEAR and FHCE…RVAG. The segment at 388-420 is disordered; sequence QHISSRRHKDRVAGKPTKPKYSPYNKQQRSSSS.

Its subcellular location is the nucleus. Its function is as follows. May play a role in p53/TP53-mediated apoptosis. The polypeptide is Zinc finger protein 385B (znf385b) (Danio rerio (Zebrafish)).